The sequence spans 189 residues: Ion-translocating oxidoreductase complex subunit B (189 aa).

The interval 1-26 (MSQVIIAIILLGLLALAFGALLGYAA) is hydrophobic. The 59-residue stretch at 32–90 (EGDPIIDQAEALLPQTQCGQCGYPGCRPYAEAIANGEKINKCPPGGTATMEKLAELMGV) folds into the 4Fe-4S domain. Residues cysteine 49, cysteine 52, cysteine 57, cysteine 73, cysteine 114, cysteine 117, cysteine 120, cysteine 124, cysteine 144, cysteine 147, cysteine 150, and cysteine 154 each coordinate [4Fe-4S] cluster. 4Fe-4S ferredoxin-type domains follow at residues 105–134 (KVAFIREAECIGCTKCIQACPVDAILGTGK) and 135–164 (QMHTVITDYCTGCDLCVEPCPVDCIDMIPV).

This sequence belongs to the 4Fe4S bacterial-type ferredoxin family. RnfB subfamily. In terms of assembly, the complex is composed of six subunits: RnfA, RnfB, RnfC, RnfD, RnfE and RnfG. The cofactor is [4Fe-4S] cluster.

It localises to the cell inner membrane. Functionally, part of a membrane-bound complex that couples electron transfer with translocation of ions across the membrane. The sequence is that of Ion-translocating oxidoreductase complex subunit B from Shewanella loihica (strain ATCC BAA-1088 / PV-4).